A 430-amino-acid chain; its full sequence is Long-chain specific acyl-CoA dehydrogenase, mitochondrial (430 aa).

Residues 1–30 (MAARLLRGSLRVLGGHRAPRQLPAARCSHS) constitute a mitochondrion transit peptide. Lys-42 bears the N6-acetyllysine mark. The residue at position 54 (Ser-54) is a Phosphoserine. Lys-66 and Lys-81 each carry N6-acetyllysine; alternate. N6-succinyllysine; alternate occurs at positions 66 and 81. Residues Lys-92 and Lys-95 each carry the N6-acetyllysine modification. Position 165 is an N6-succinyllysine (Lys-165). FAD contacts are provided by residues 170–179 (IAMTEPGAGS) and 203–205 (FIS). Ser-179 contributes to the substrate binding site. Residue 227–228 (AH) participates in substrate binding. N6-succinyllysine is present on Lys-240. N6-acetyllysine; alternate occurs at positions 254 and 279. N6-succinyllysine; alternate occurs at positions 254 and 279. Residues Tyr-282 and 289 to 292 (PQER) contribute to the substrate site. The active-site Proton acceptor is the Glu-291. Arg-317 serves as a coordination point for FAD. At Lys-318 the chain carries N6-acetyllysine. Position 322 is an N6-acetyllysine; alternate (Lys-322). Lys-322 is subject to N6-succinyllysine; alternate. Position 328 (Gln-328) interacts with FAD. Lys-358 carries the post-translational modification N6-acetyllysine. Ser-362 carries the phosphoserine modification. Residue 385–389 (QLHGG) participates in FAD binding. 412-413 (GG) contributes to the substrate binding site. Residue 414-416 (TNE) participates in FAD binding.

The protein belongs to the acyl-CoA dehydrogenase family. Homotetramer. FAD is required as a cofactor. Post-translationally, acetylation at Lys-318 and Lys-322 in proximity of the cofactor-binding sites strongly reduces catalytic activity. These sites are deacetylated by SIRT3.

It localises to the mitochondrion matrix. The enzyme catalyses a long-chain 2,3-saturated fatty acyl-CoA + oxidized [electron-transfer flavoprotein] + H(+) = a long-chain (2E)-enoyl-CoA + reduced [electron-transfer flavoprotein]. It carries out the reaction hexanoyl-CoA + oxidized [electron-transfer flavoprotein] + H(+) = (2E)-hexenoyl-CoA + reduced [electron-transfer flavoprotein]. The catalysed reaction is octanoyl-CoA + oxidized [electron-transfer flavoprotein] + H(+) = (2E)-octenoyl-CoA + reduced [electron-transfer flavoprotein]. It catalyses the reaction decanoyl-CoA + oxidized [electron-transfer flavoprotein] + H(+) = (2E)-decenoyl-CoA + reduced [electron-transfer flavoprotein]. The enzyme catalyses dodecanoyl-CoA + oxidized [electron-transfer flavoprotein] + H(+) = (2E)-dodecenoyl-CoA + reduced [electron-transfer flavoprotein]. It carries out the reaction tetradecanoyl-CoA + oxidized [electron-transfer flavoprotein] + H(+) = (2E)-tetradecenoyl-CoA + reduced [electron-transfer flavoprotein]. The catalysed reaction is oxidized [electron-transfer flavoprotein] + hexadecanoyl-CoA + H(+) = (2E)-hexadecenoyl-CoA + reduced [electron-transfer flavoprotein]. It catalyses the reaction octadecanoyl-CoA + oxidized [electron-transfer flavoprotein] + H(+) = (2E)-octadecenoyl-CoA + reduced [electron-transfer flavoprotein]. The enzyme catalyses eicosanoyl-CoA + oxidized [electron-transfer flavoprotein] + H(+) = (2E)-eicosenoyl-CoA + reduced [electron-transfer flavoprotein]. It carries out the reaction docosanoyl-CoA + oxidized [electron-transfer flavoprotein] + H(+) = (2E)-docosenoyl-CoA + reduced [electron-transfer flavoprotein]. The catalysed reaction is tetracosanoyl-CoA + oxidized [electron-transfer flavoprotein] + H(+) = (2E)-tetracosenoyl-CoA + reduced [electron-transfer flavoprotein]. It catalyses the reaction (5E)-tetradecenoyl-CoA + oxidized [electron-transfer flavoprotein] + H(+) = (2E,5E)-tetradecadienoyl-CoA + reduced [electron-transfer flavoprotein]. The enzyme catalyses (5Z)-tetradecenoyl-CoA + oxidized [electron-transfer flavoprotein] + H(+) = (2E,5Z)-tetradecadienoyl-CoA + reduced [electron-transfer flavoprotein]. It carries out the reaction oxidized [electron-transfer flavoprotein] + (9Z)-octadecenoyl-CoA + H(+) = (2E,9Z)-octadecadienoyl-CoA + reduced [electron-transfer flavoprotein]. It functions in the pathway lipid metabolism; mitochondrial fatty acid beta-oxidation. Long-chain specific acyl-CoA dehydrogenase is one of the acyl-CoA dehydrogenases that catalyze the first step of mitochondrial fatty acid beta-oxidation, an aerobic process breaking down fatty acids into acetyl-CoA and allowing the production of energy from fats. The first step of fatty acid beta-oxidation consists in the removal of one hydrogen from C-2 and C-3 of the straight-chain fatty acyl-CoA thioester, resulting in the formation of trans-2-enoyl-CoA. Among the different mitochondrial acyl-CoA dehydrogenases, long-chain specific acyl-CoA dehydrogenase can act on saturated and unsaturated acyl-CoAs with 6 to 24 carbons with a preference for 8 to 18 carbons long primary chains. In Homo sapiens (Human), this protein is Long-chain specific acyl-CoA dehydrogenase, mitochondrial.